We begin with the raw amino-acid sequence, 700 residues long: MLASALLVFLCCFKGHAGSSPHFLQQPEDMVVLLGEEARLPCALGAYRGLVQWTKDGLALGGERDLPGWSRYWISGNSASGQHDLHIKPVELEDEASYECQASQAGLRSRPAQLHVMVPPEAPQVLGGPSVSLVAGVPGNLTCRSRGDSRPAPELLWFRDGIRLDGSSFHQTTLKDKATGTVENTLFLTPSSHDDGATLICRARSQALPTGRDTAVTLSLQYPPMVTLSAEPQTVQEGEKVTFLCQATAQPPVTGYRWAKGGSPVLGARGPRLEVVADATFLTEPVSCEVSNAVGSANRSTALEVLYGPILQAKPKSVSVDVGKDASFSCVWRGNPLPRITWTRMGGSQVLSSGPTLRLPSVALEDAGDYVCRAEPRRTGLGGGKAQARLTVNAPPVVTALQPAPAFLRGPARLQCVVFASPAPDSVVWSWDEGFLEAGSLGRFLVEAFPAPEVEGGQGPGLISVLHISGTQESDFTTGFNCSARNRLGEGRVQIHLGRRDLLPTVRIVAGAASAATSLLMVITGVVLCCWRHGSLSKQKNLVRIPGSSEGSSSRGPEEETGSSEDRGPIVHTDHSDLVLEEKEALETKDPTNGYYRVRGVSVSLSLGEAPGGGLFLPPPSPIGLPGTPTYYDFKPHLDLVPPCRLYRARAGYLTTPHPRAFTSYMKPTSFGPPELSSGTPPFPYATLSPPSHQRLQTHV.

An N-terminal signal peptide occupies residues Met1–Ser19. At Ser20–Arg507 the chain is on the extracellular side. 5 consecutive Ig-like C2-type domains span residues Pro21–His115, Pro120–Ser219, Pro224–Glu304, Pro309–Thr391, and Pro395–Leu497. A disulfide bridge connects residues Cys42 and Cys100. A glycan (N-linked (GlcNAc...) asparagine) is linked at Asn140. 2 disulfide bridges follow: Cys143/Cys201 and Cys245/Cys288. Residues Arg146–Asp148 carry the Cell attachment site motif. Asn298 carries N-linked (GlcNAc...) asparagine glycosylation. Cystine bridges form between Cys330/Cys372 and Cys416/Cys482. Residue Asn481 is glycosylated (N-linked (GlcNAc...) asparagine). Residues Ile508–Leu528 form a helical membrane-spanning segment. The Cytoplasmic portion of the chain corresponds to Cys529–Val700. Residues Leu542–Ser576 are disordered. Residue Ser563 is modified to Phosphoserine. Basic and acidic residues predominate over residues Ser564–Ser576. Phosphotyrosine occurs at positions 595, 596, and 653. Residues Phe671 to Val700 form a disordered region. Over residues Ser689–Val700 the composition is skewed to polar residues.

Belongs to the immunoglobulin superfamily. Homodimer. Interacts with NPHS2/podocin (via the C-terminus). Interacts with NPHS1 (via the Ig-like domains). Interacts with FYN. N-glycosylated. In terms of processing, phosphorylated at Ser-548 or Ser-549; due to site ambiguity, the exact position of the serine phosphorylation could not be determined. Phosphorylation at residues Tyr-631 and/or Tyr-632. FYN mediates tyrosine phosphorylation in pancreatic beta-cells. Post-translationally, the extracellular domain is cleaved leading to the generation of a soluble fragment and a membrane-bound C-terminal fragment, which is further cleaved by gamma-secretase. In terms of tissue distribution, highly expressed in beta-cells of the pancreatic islets. Expression is seen in podocytes of kidney glomeruli, and in the cerebellum and hindbrain at 12.5 dpc, in the spinal cord at 10.5 dpc, and in retina and hypothalamus at 13.5 dpc.

The protein localises to the cell membrane. Functionally, may regulate basal insulin secretion. This chain is Kin of IRRE-like protein 2 (Kirrel2), found in Mus musculus (Mouse).